The following is a 414-amino-acid chain: MHYCVLSAFLILHLVTVALSLSTCSTLDMDQFMRKRIEAIRGQILSKLKLTSPPEDYPEPEEVPPEVISIYNSTRDLLQEKASRRAAACERERSDEEYYAKEVYKIDMPPFFPSENAIPPTFYRPYFRIVRFDVSAMEKNASNLVKAEFRVFRLQNPKARVPEQRIELYQILKSKDLTSPTQRYIDSKVVKTRAEGEWLSFDVTDAVHEWLHHKDRNLGFKISLHCPCCTFVPSNNYIIPNKSEELEARFAGIDGTSTYTSGDQKTIKSTRKKNSGKTPHLLLMLLPSYRLESQQTNRRKKRALDAAYCFRNVQDNCCLRPLYIDFKRDLGWKWIHEPKGYNANFCAGACPYLWSSDTQHSRVLSLYNTINPEASASPCCVSQDLEPLTILYYIGKTPKIEQLSNMIVKSCKCS.

Residues 1–19 form the signal peptide; it reads MHYCVLSAFLILHLVTVAL. N-linked (GlcNAc...) asparagine glycosylation is found at Asn72, Asn140, and Asn241. Cystine bridges form between Cys309–Cys318, Cys317–Cys380, Cys346–Cys411, and Cys350–Cys413.

The protein belongs to the TGF-beta family. Interacts with the serine proteases, HTRA1 and HTRA3. Interacts with ASPN. Interacts with MFAP5. As to quaternary structure, interacts with Transforming growth factor beta-2 (TGF-beta-2) chain; interaction is non-covalent and maintains (TGF-beta-2) in a latent state. Interacts with LRRC32/GARP; leading to regulate activation of TGF-beta-2. Interacts with NREP; the interaction results in a decrease in TGFB2 autoinduction. In terms of assembly, transforming growth factor beta-2: Homodimer; disulfide-linked. Transforming growth factor beta-2: Interacts with TGF-beta receptors (TGFBR1 and TGFBR2), leading to signal transduction. Post-translationally, the precursor proprotein is cleaved in the Golgi apparatus to form Transforming growth factor beta-2 (TGF-beta-2) and Latency-associated peptide (LAP) chains, which remain non-covalently linked, rendering TGF-beta-2 inactive.

The protein resides in the secreted. It localises to the extracellular space. It is found in the extracellular matrix. In terms of biological role, precursor of the Latency-associated peptide (LAP) and Transforming growth factor beta-2 (TGF-beta-2) chains, which constitute the regulatory and active subunit of TGF-beta-2, respectively. Required to maintain the Transforming growth factor beta-2 (TGF-beta-2) chain in a latent state during storage in extracellular matrix. Associates non-covalently with TGF-beta-2 and regulates its activation via interaction with 'milieu molecules', such as LTBP1 and LRRC32/GARP, that control activation of TGF-beta-2. Its function is as follows. Multifunctional protein that regulates various processes such as angiogenesis and heart development. Activation into mature form follows different steps: following cleavage of the proprotein in the Golgi apparatus, Latency-associated peptide (LAP) and Transforming growth factor beta-2 (TGF-beta-2) chains remain non-covalently linked rendering TGF-beta-2 inactive during storage in extracellular matrix. At the same time, LAP chain interacts with 'milieu molecules', such as LTBP1 and LRRC32/GARP, that control activation of TGF-beta-2 and maintain it in a latent state during storage in extracellular milieus. Once activated following release of LAP, TGF-beta-2 acts by binding to TGF-beta receptors (TGFBR1 and TGFBR2), which transduce signal. The sequence is that of Transforming growth factor beta-2 proprotein (TGFB2) from Chlorocebus aethiops (Green monkey).